A 155-amino-acid chain; its full sequence is Regulatory protein RecX (155 aa).

This sequence belongs to the RecX family.

It is found in the cytoplasm. In terms of biological role, modulates RecA activity. This is Regulatory protein RecX from Vibrio campbellii (strain ATCC BAA-1116).